The sequence spans 458 residues: Chromosomal replication initiator protein DnaA (458 aa).

The segment at 1 to 93 is domain I, interacts with DnaA modulators; that stretch reads MKTELSEVWQ…NVIEDPAAEP (93 aa). The domain II stretch occupies residues 94 to 119; the sequence is VDAPNVADLPAGTSAPAAEQNARLLG. Residues 120 to 336 form a domain III, AAA+ region region; it reads YINPKYTFET…GALTRVVAYA (217 aa). Residues Gly-164, Gly-166, Lys-167, and Thr-168 each coordinate ATP. The interval 337-458 is domain IV, binds dsDNA; that stretch reads NMLKCPLTYD…EQLIARIRAE (122 aa).

It belongs to the DnaA family. Oligomerizes as a right-handed, spiral filament on DNA at oriC.

It localises to the cytoplasm. Functionally, plays an essential role in the initiation and regulation of chromosomal replication. ATP-DnaA binds to the origin of replication (oriC) to initiate formation of the DNA replication initiation complex once per cell cycle. Binds the DnaA box (a 9 base pair repeat at the origin) and separates the double-stranded (ds)DNA. Forms a right-handed helical filament on oriC DNA; dsDNA binds to the exterior of the filament while single-stranded (ss)DNA is stabiized in the filament's interior. The ATP-DnaA-oriC complex binds and stabilizes one strand of the AT-rich DNA unwinding element (DUE), permitting loading of DNA polymerase. After initiation quickly degrades to an ADP-DnaA complex that is not apt for DNA replication. Binds acidic phospholipids. The polypeptide is Chromosomal replication initiator protein DnaA (Symbiobacterium thermophilum (strain DSM 24528 / JCM 14929 / IAM 14863 / T)).